Consider the following 35-residue polypeptide: Small toxic polypeptide LdrD (35 aa).

Residues 10–32 (FWHDLAAPVIAGILASMIVNWLN) traverse the membrane as a helical segment.

This sequence belongs to the Ldr toxic peptide family.

It localises to the cell inner membrane. Toxic component of a type I toxin-antitoxin (TA) system. Overexpression causes rapid cell killing and nucleoid condensation of the host cell. Overexpression induces stress-response and a number of membrane protein genes. May inhibit ATP synthesis due to its insertion in the cell inner membrane. The chain is Small toxic polypeptide LdrD (ldrD) from Escherichia coli (strain K12).